The sequence spans 335 residues: Capsular polysaccharide phosphotransferase WcwK (335 aa).

It belongs to the stealth family.

This is Capsular polysaccharide phosphotransferase WcwK (wcwK) from Streptococcus pneumoniae.